A 445-amino-acid chain; its full sequence is Glutamyl-tRNA reductase (445 aa).

Substrate contacts are provided by residues 49–52 (TCNR), S109, 114–116 (ETQ), and Q120. C50 acts as the Nucleophile in catalysis. Residue 189–194 (GAGEMS) coordinates NADP(+).

This sequence belongs to the glutamyl-tRNA reductase family. In terms of assembly, homodimer.

It catalyses the reaction (S)-4-amino-5-oxopentanoate + tRNA(Glu) + NADP(+) = L-glutamyl-tRNA(Glu) + NADPH + H(+). The protein operates within porphyrin-containing compound metabolism; protoporphyrin-IX biosynthesis; 5-aminolevulinate from L-glutamyl-tRNA(Glu): step 1/2. In terms of biological role, catalyzes the NADPH-dependent reduction of glutamyl-tRNA(Glu) to glutamate 1-semialdehyde (GSA). The polypeptide is Glutamyl-tRNA reductase (Staphylococcus carnosus (strain TM300)).